A 350-amino-acid chain; its full sequence is Kievitone hydratase (350 aa).

The N-terminal stretch at 1 to 19 (MMISSVLVAGVVAVSAALA) is a signal peptide.

In terms of assembly, homodimer. Glycosylated.

It localises to the secreted. The catalysed reaction is kievitone hydrate = kievitone + H2O. Converts fungitoxic kievitone to the less toxic kievitone hydrate, and thereby protects the pathogenic fungus against this phytoalexin. The chain is Kievitone hydratase (khs) from Fusarium solani subsp. phaseoli (Nectria haematococca).